A 271-amino-acid polypeptide reads, in one-letter code: Shikimate dehydrogenase (NADP(+)) (271 aa).

Residues 19–21 and Thr65 each bind shikimate; that span reads SLS. The Proton acceptor role is filled by Lys69. Residue Glu81 participates in NADP(+) binding. 2 residues coordinate shikimate: Asn90 and Asp105. NADP(+)-binding positions include 128–132, 150–155, and Ile211; these read GAGGA and NRTIEK. Tyr213 contributes to the shikimate binding site. Gly234 provides a ligand contact to NADP(+).

The protein belongs to the shikimate dehydrogenase family. Homodimer.

The catalysed reaction is shikimate + NADP(+) = 3-dehydroshikimate + NADPH + H(+). It participates in metabolic intermediate biosynthesis; chorismate biosynthesis; chorismate from D-erythrose 4-phosphate and phosphoenolpyruvate: step 4/7. Functionally, involved in the biosynthesis of the chorismate, which leads to the biosynthesis of aromatic amino acids. Catalyzes the reversible NADPH linked reduction of 3-dehydroshikimate (DHSA) to yield shikimate (SA). The sequence is that of Shikimate dehydrogenase (NADP(+)) from Pyrococcus furiosus (strain ATCC 43587 / DSM 3638 / JCM 8422 / Vc1).